Consider the following 569-residue polypeptide: 4-coumarate--CoA ligase 2 (569 aa).

ATP is bound by residues Ser219, Ser220, Gly221, Thr222, Thr223, and Lys227. (E)-4-coumaroyl-AMP-binding residues include Phe269 and Ser273. Arg290 serves as a coordination point for CoA. The tract at residues 292–361 (EMGAMLGAIE…ARLPQAIFGQ (70 aa)) is SBD1. Positions 339, 361, 362, 366, and 374 each coordinate (E)-4-coumaroyl-AMP. Residues Gln361, Gly362, and Thr366 each contribute to the ATP site. Residues 362–429 (GYGMTEAGPV…IRGPQIMKGY (68 aa)) form an SBD2 region. Residues Asp450 and Arg465 each contribute to the ATP site. Positions 467 and 471 each coordinate (E)-4-coumaroyl-AMP. Residues Lys473 and Gly474 each contribute to the CoA site. An ATP-binding site is contributed by Lys556.

Belongs to the ATP-dependent AMP-binding enzyme family. Mg(2+) serves as cofactor. As to expression, expressed in roots, stems, leaf blades, leaf sheaths and spikelets.

It carries out the reaction (E)-ferulate + ATP + CoA = (E)-feruloyl-CoA + AMP + diphosphate. It catalyses the reaction (E)-4-coumarate + ATP + CoA = (E)-4-coumaroyl-CoA + AMP + diphosphate. The catalysed reaction is (E)-caffeate + ATP + CoA = (E)-caffeoyl-CoA + AMP + diphosphate. The enzyme catalyses (E)-cinnamate + ATP + CoA = (E)-cinnamoyl-CoA + AMP + diphosphate. It carries out the reaction (E)-ferulate + ATP + H(+) = (E)-feruloyl-AMP + diphosphate. It catalyses the reaction (E)-feruloyl-AMP + CoA = (E)-feruloyl-CoA + AMP + H(+). The catalysed reaction is (E)-4-coumarate + ATP + H(+) = (E)-4-coumaroyl-AMP + diphosphate. The enzyme catalyses (E)-4-coumaroyl-AMP + CoA = (E)-4-coumaroyl-CoA + AMP + H(+). It carries out the reaction (E)-caffeate + ATP + H(+) = (E)-caffeoyl-AMP + diphosphate. It catalyses the reaction (E)-caffeoyl-AMP + CoA = (E)-caffeoyl-CoA + AMP + H(+). Its pathway is phytoalexin biosynthesis; 3,4',5-trihydroxystilbene biosynthesis; 3,4',5-trihydroxystilbene from trans-4-coumarate: step 1/2. Functionally, involved in the phenylpropanoid metabolism by mediating the activation of a number of hydroxycinnamates for the biosynthesis of monolignols and other phenolic secondary metabolites. Catalyzes the formation of CoA esters of cinnamate, 4-coumarate, caffeate and ferulate. Is more efficient with substrates in the following order: ferulate &gt; 4-coumarate &gt; caffeate &gt; cinnamate. Cannot convert sinapate to its corresponding CoA ester. Follows a two-step reaction mechanism, wherein the carboxylate substrate first undergoes adenylation by ATP, followed by a thioesterification in the presence of CoA to yield the final CoA thioester. The polypeptide is 4-coumarate--CoA ligase 2 (Oryza sativa subsp. japonica (Rice)).